Reading from the N-terminus, the 3801-residue chain is Lysosomal-trafficking regulator (3801 aa).

The disordered stretch occupies residues 148-173 (KITHRYSVRDARKTQLSTSDSEANSD). A Phosphoserine modification is found at Ser-164. Thr-165 carries the post-translational modification Phosphothreonine. Ser-166 carries the phosphoserine modification. A WD 1 repeat occupies 662–700 (ELSSSLSSPSYRFQGILPSSGSEDLLWKWDALKAYQNFV). Over residues 1181 to 1190 (AMTEKSHQSA) the composition is skewed to basic and acidic residues. Disordered regions lie at residues 1181-1203 (AMTE…FSEE) and 1221-1256 (YEAD…SPND). Acidic residues predominate over residues 1221 to 1238 (YEADSESNPEDGETQDDG). The segment covering 1246-1256 (EGFSASSSPND) has biased composition (polar residues). Phosphoserine occurs at positions 1509 and 1510. The stretch at 1582 to 1626 (SQENIFLPSKWQHLVLTYLQQPQGKRRIHGKISIWVSGQRKPDVT) is one WD 2 repeat. A phosphoserine mark is found at Ser-2105, Ser-2124, Ser-2213, Ser-2217, and Ser-2264. The span at 2205–2215 (KQLGAEPRSED) shows a compositional bias: basic and acidic residues. Positions 2205–2224 (KQLGAEPRSEDDSPGDESCP) are disordered. Residues 3009–3115 (AASESIRVNR…VRDDVYHNIL (107 aa)) enclose the BEACH-type PH domain. One can recognise a BEACH domain in the interval 3120 to 3422 (PNLLEYGNIT…QLFHMAHVSR (303 aa)). WD repeat units follow at residues 3563–3602 (SQQY…STPS), 3614–3653 (GHTE…YVQS), 3656–3699 (GHKS…VGHV), 3700–3744 (HCRE…PVRE), and 3749–3788 (KSNK…RLKQ).

Interacts with CPAP, LIP8 and ZNF521. Abundantly expressed in adult and fetal thymus, peripheral blood leukocytes, bone marrow and several regions of the adult brain.

The protein resides in the cytoplasm. Functionally, adapter protein that regulates and/or fission of intracellular vesicles such as lysosomes. Might regulate trafficking of effectors involved in exocytosis. In cytotoxic T-cells and natural killer (NK) cells, has role in the regulation of size, number and exocytosis of lytic granules. In macrophages and dendritic cells, regulates phagosome maturation by controlling the conversion of early phagosomal compartments into late phagosomes. In macrophages and dendritic cells, specifically involved in TLR3- and TLR4-induced production of pro-inflammatory cytokines by regulating the endosomal TLR3- TICAM1/TRIF and TLR4- TICAM1/TRIF signaling pathways. This Homo sapiens (Human) protein is Lysosomal-trafficking regulator (LYST).